The chain runs to 453 residues: tRNA modification GTPase MnmE (453 aa).

3 residues coordinate (6S)-5-formyl-5,6,7,8-tetrahydrofolate: R28, E90, and R129. Residues G224–G375 form the TrmE-type G domain. N234 provides a ligand contact to K(+). GTP-binding positions include N234–S239, T253–T259, D278–G281, and S356–R358. Position 238 (S238) interacts with Mg(2+). K(+) is bound by residues T253, L255, and T258. Residue T259 participates in Mg(2+) binding. Residue K453 coordinates (6S)-5-formyl-5,6,7,8-tetrahydrofolate.

Belongs to the TRAFAC class TrmE-Era-EngA-EngB-Septin-like GTPase superfamily. TrmE GTPase family. Homodimer. Heterotetramer of two MnmE and two MnmG subunits. The cofactor is K(+).

The protein localises to the cytoplasm. Exhibits a very high intrinsic GTPase hydrolysis rate. Involved in the addition of a carboxymethylaminomethyl (cmnm) group at the wobble position (U34) of certain tRNAs, forming tRNA-cmnm(5)s(2)U34. The polypeptide is tRNA modification GTPase MnmE (Synechococcus sp. (strain RCC307)).